The chain runs to 490 residues: Probable cytosol aminopeptidase (490 aa).

2 residues coordinate Mn(2+): Lys-255 and Asp-260. The active site involves Lys-267. Mn(2+) contacts are provided by Asp-278, Asp-337, and Glu-339. Arg-341 is a catalytic residue.

It belongs to the peptidase M17 family. Mn(2+) is required as a cofactor.

The protein localises to the cytoplasm. The catalysed reaction is Release of an N-terminal amino acid, Xaa-|-Yaa-, in which Xaa is preferably Leu, but may be other amino acids including Pro although not Arg or Lys, and Yaa may be Pro. Amino acid amides and methyl esters are also readily hydrolyzed, but rates on arylamides are exceedingly low.. The enzyme catalyses Release of an N-terminal amino acid, preferentially leucine, but not glutamic or aspartic acids.. In terms of biological role, presumably involved in the processing and regular turnover of intracellular proteins. Catalyzes the removal of unsubstituted N-terminal amino acids from various peptides. The polypeptide is Probable cytosol aminopeptidase (Gluconobacter oxydans (strain 621H) (Gluconobacter suboxydans)).